We begin with the raw amino-acid sequence, 242 residues long: Segregation and condensation protein A (242 aa).

The protein belongs to the ScpA family. As to quaternary structure, component of a cohesin-like complex composed of ScpA, ScpB and the Smc homodimer, in which ScpA and ScpB bind to the head domain of Smc. The presence of the three proteins is required for the association of the complex with DNA.

Its subcellular location is the cytoplasm. Participates in chromosomal partition during cell division. May act via the formation of a condensin-like complex containing Smc and ScpB that pull DNA away from mid-cell into both cell halves. This Streptococcus pneumoniae serotype 2 (strain D39 / NCTC 7466) protein is Segregation and condensation protein A.